The chain runs to 1331 residues: MRNLKLHQTLEFRDIQAPGKPQCFCLRAEQGTVLIGSERGLTEVDPVKKEVKTEISLVAEGFLPEDGSGCIVGIQDLLDQESVCVATASGDVIVCNVSTQQLECVGNVASGISVMSWSPDQELLLLATAQQTLIMMTRDYEVITEQQIHQDDFGEGKFITVGWGSKDTQFHGSEGRPITFPVQMHESALSWDDHRPQITWRGDGQFFAVSVVCSQTGARKIRVWNREFALQSTSESVPGLGPSLAWKPSGSLIASTQDKPNQQDVVFFEKNGLLHGYFTLPFLKDEVKVNDLLWNADSSVLAVWLEDLPKEGSSTLKSYVQLWTVGNYHWYLKQSLPFSTTGKNQIVSLLWDPVTPGRLHVLCQGWRYLCCDWHWTTDRSSGNSADDLANVAVIDGNKVLVTVFQRTVTPPPMCTYRLLIPHPVNQVMSSAHLGNDLAVLDASNQISVYKCDDKPDMDSTVKLGAVGGTGFKVPLRTPHLEKRYRIQFGNKEEEEDVSPLQFRFLTWIEGDAFLAISHSHSSPQSIIHHLTMAGSEGDEEQGQLNVSSSVTVDGVVIGLCCCSKTKSSAVQLADGQVLKYLWESPSSAVEPWKNSEGRPVRFARPCTQMEAAAIGGEECVLGLTDRCRFFINDTEVASNITSFAVCDDFLLVTTHSHTCQCFSLSGASLKMLQAGLCGSQVPSGEILRKVERGSRIVTVVPQDTKLILQMPRGNLEVVHHRALVLAQIRKWLDKLMFKEAFECMRKLRINLNLIHDHNPKVFLENVETFIKQIDSVNHLNLFFTELKEEDVTKTMYPPPVTKSVQVSTNPDGKKVDLICDAMRVAMETINPRKFCLSILTSHVKKTTPELDIVLQKVHELQGKIPFVPESVSAEEALKYLLLLVDVNELFNHSLGTYDFDLVLMVAEKSQKDPKEYLPFLNTLKKMETNYQRFTIDKYLKRYEKALGHLSKCGPEYFTECLNLIKDKNLYKEALKLYRPDSPQYQAVSVAYGEHLVQELLYEPAGLVFARCGAHEKALEAFLACGSWQQALCMAAQLQMAKDKVAGLARTLAGKLVEQRKHSEAATVLEQYALDYEEAVLLLLEGSAWEEALRLVYKYDRVDIIETSVKPSILEAQKNYMDFLDSQTATFIRHKNRLKVVRELKSQRPRVHVDHEVAHGRETDLFSETSSIRSGSEMSGRYSHSNSRISARSSKNRRKAERKKHSLKEGSPLEGLALLEALSEVVQSIEKLKDEVHAILKVLFLFEFEEQARELQRAFESTLQLMGTALPDIWTLTGQQSSSTPVLGPSSTVNSIMASYQQQKTCVPVLDAWACLPPKIDQRSQWKLSLLE.

Phosphoserine is present on residues Ser-803, Ser-1170, and Ser-1173. Residues 884 to 1331 form a mediates dimerization region; sequence VDVNELFNHS…RSQWKLSLLE (448 aa). Over residues 1167 to 1176 the composition is skewed to polar residues; sequence ETSSIRSGSE. The tract at residues 1167 to 1207 is disordered; that stretch reads ETSSIRSGSEMSGRYSHSNSRISARSSKNRRKAERKKHSLK. The tract at residues 1190–1208 is required for binding to tRNA; it reads ARSSKNRRKAERKKHSLKE. Residues 1193–1205 are compositionally biased toward basic residues; that stretch reads SKNRRKAERKKHS.

Belongs to the ELP1/IKA1 family. As to quaternary structure, homodimer; dimerization promotes ELP1 stability and elongator complex formation. Component of the elongator complex which consists of ELP1, ELP2, ELP3, ELP4, ELP5 and ELP6. Interacts preferentially with MAP3K14/NIK followed by IKK-alpha and IKK-beta. In terms of processing, phosphorylated.

It is found in the cytoplasm. The protein localises to the nucleus. The protein operates within tRNA modification; 5-methoxycarbonylmethyl-2-thiouridine-tRNA biosynthesis. Its function is as follows. Component of the elongator complex which is required for multiple tRNA modifications, including mcm5U (5-methoxycarbonylmethyl uridine), mcm5s2U (5-methoxycarbonylmethyl-2-thiouridine), and ncm5U (5-carbamoylmethyl uridine). The elongator complex catalyzes formation of carboxymethyluridine in the wobble base at position 34 in tRNAs. Regulates the migration and branching of projection neurons in the developing cerebral cortex, through a process depending on alpha-tubulin acetylation. ELP1 binds to tRNA, mediating interaction of the elongator complex with tRNA. May act as a scaffold protein that assembles active IKK-MAP3K14 complexes (IKKA, IKKB and MAP3K14/NIK). In Rattus norvegicus (Rat), this protein is Elongator complex protein 1 (Elp1).